We begin with the raw amino-acid sequence, 430 residues long: Methylenetetrahydrofolate--tRNA-(uracil-5-)-methyltransferase TrmFO (430 aa).

Residue 9 to 14 (GAGLAG) participates in FAD binding.

Belongs to the MnmG family. TrmFO subfamily. It depends on FAD as a cofactor.

Its subcellular location is the cytoplasm. It catalyses the reaction uridine(54) in tRNA + (6R)-5,10-methylene-5,6,7,8-tetrahydrofolate + NADH + H(+) = 5-methyluridine(54) in tRNA + (6S)-5,6,7,8-tetrahydrofolate + NAD(+). The enzyme catalyses uridine(54) in tRNA + (6R)-5,10-methylene-5,6,7,8-tetrahydrofolate + NADPH + H(+) = 5-methyluridine(54) in tRNA + (6S)-5,6,7,8-tetrahydrofolate + NADP(+). Functionally, catalyzes the folate-dependent formation of 5-methyl-uridine at position 54 (M-5-U54) in all tRNAs. The sequence is that of Methylenetetrahydrofolate--tRNA-(uracil-5-)-methyltransferase TrmFO from Fervidobacterium nodosum (strain ATCC 35602 / DSM 5306 / Rt17-B1).